Here is a 159-residue protein sequence, read N- to C-terminus: Ribosomal RNA large subunit methyltransferase H (159 aa).

S-adenosyl-L-methionine-binding positions include leucine 76, glycine 108, and 127 to 132 (FSKMTF).

The protein belongs to the RNA methyltransferase RlmH family. As to quaternary structure, homodimer.

It is found in the cytoplasm. The enzyme catalyses pseudouridine(1915) in 23S rRNA + S-adenosyl-L-methionine = N(3)-methylpseudouridine(1915) in 23S rRNA + S-adenosyl-L-homocysteine + H(+). Specifically methylates the pseudouridine at position 1915 (m3Psi1915) in 23S rRNA. This Staphylococcus aureus (strain Mu3 / ATCC 700698) protein is Ribosomal RNA large subunit methyltransferase H.